The sequence spans 876 residues: Alanine--tRNA ligase (876 aa).

The Zn(2+) site is built by histidine 564, histidine 568, cysteine 666, and histidine 670.

This sequence belongs to the class-II aminoacyl-tRNA synthetase family. The cofactor is Zn(2+).

The protein resides in the cytoplasm. It catalyses the reaction tRNA(Ala) + L-alanine + ATP = L-alanyl-tRNA(Ala) + AMP + diphosphate. In terms of biological role, catalyzes the attachment of alanine to tRNA(Ala) in a two-step reaction: alanine is first activated by ATP to form Ala-AMP and then transferred to the acceptor end of tRNA(Ala). Also edits incorrectly charged Ser-tRNA(Ala) and Gly-tRNA(Ala) via its editing domain. The polypeptide is Alanine--tRNA ligase (Porphyromonas gingivalis (strain ATCC BAA-308 / W83)).